The chain runs to 660 residues: Bifunctional polymyxin resistance protein ArnA (660 aa).

Positions 1–304 (MKAVVFAYHD…TLGLVAGAII (304 aa)) are formyltransferase ArnAFT. His104 acts as the Proton donor; for formyltransferase activity in catalysis. (6R)-10-formyltetrahydrofolate-binding positions include Arg114 and 136–140 (VSRAD). Positions 314–660 (RRTRVLILGV…KTVELTEPQA (347 aa)) are dehydrogenase ArnADH. NAD(+) contacts are provided by residues Asp347 and 368-369 (DI). UDP-alpha-D-glucuronate is bound by residues Ala393, Tyr398, and 432 to 433 (TS). Glu434 (proton acceptor; for decarboxylase activity) is an active-site residue. UDP-alpha-D-glucuronate contacts are provided by residues Arg460, Asn492, 526 to 535 (KLIDGGRQKR), and Tyr613. The active-site Proton donor; for decarboxylase activity is Arg619.

This sequence in the N-terminal section; belongs to the Fmt family. UDP-L-Ara4N formyltransferase subfamily. It in the C-terminal section; belongs to the NAD(P)-dependent epimerase/dehydratase family. UDP-glucuronic acid decarboxylase subfamily. As to quaternary structure, homohexamer, formed by a dimer of trimers.

It carries out the reaction UDP-alpha-D-glucuronate + NAD(+) = UDP-beta-L-threo-pentopyranos-4-ulose + CO2 + NADH. The enzyme catalyses UDP-4-amino-4-deoxy-beta-L-arabinose + (6R)-10-formyltetrahydrofolate = UDP-4-deoxy-4-formamido-beta-L-arabinose + (6S)-5,6,7,8-tetrahydrofolate + H(+). The protein operates within nucleotide-sugar biosynthesis; UDP-4-deoxy-4-formamido-beta-L-arabinose biosynthesis; UDP-4-deoxy-4-formamido-beta-L-arabinose from UDP-alpha-D-glucuronate: step 1/3. Its pathway is nucleotide-sugar biosynthesis; UDP-4-deoxy-4-formamido-beta-L-arabinose biosynthesis; UDP-4-deoxy-4-formamido-beta-L-arabinose from UDP-alpha-D-glucuronate: step 3/3. It functions in the pathway bacterial outer membrane biogenesis; lipopolysaccharide biosynthesis. Its function is as follows. Bifunctional enzyme that catalyzes the oxidative decarboxylation of UDP-glucuronic acid (UDP-GlcUA) to UDP-4-keto-arabinose (UDP-Ara4O) and the addition of a formyl group to UDP-4-amino-4-deoxy-L-arabinose (UDP-L-Ara4N) to form UDP-L-4-formamido-arabinose (UDP-L-Ara4FN). The modified arabinose is attached to lipid A and is required for resistance to polymyxin and cationic antimicrobial peptides. The sequence is that of Bifunctional polymyxin resistance protein ArnA from Enterobacter sp. (strain 638).